Here is a 437-residue protein sequence, read N- to C-terminus: Acyl-coenzyme A thioesterase 2, chloroplastic (437 aa).

A chloroplast-targeting transit peptide spans 1-13 (MDLSSSPNHPITV). HotDog ACOT-type domains follow at residues 89-211 (ILYN…RDSK) and 287-404 (RDTR…RPEA).

This sequence belongs to the acyl coenzyme A hydrolase family. Mostly expressed at low levels in glandular trichomes (lupulin glands), and, to a lower extent, in stems, leaves, flowers and cones.

The protein resides in the plastid. The protein localises to the chloroplast. In terms of biological role, acyl-CoA thioesterases are a group of enzymes that catalyze the hydrolysis of acyl-CoAs to the free fatty acid and coenzyme A (CoASH), providing the potential to regulate intracellular levels of acyl-CoAs, free fatty acids and CoASH. The chain is Acyl-coenzyme A thioesterase 2, chloroplastic from Humulus lupulus (European hop).